The chain runs to 401 residues: Argininosuccinate synthase (401 aa).

Residues 10–18 (AYSGGLDTS) and A37 contribute to the ATP site. Y89 is a binding site for L-citrulline. G119 provides a ligand contact to ATP. Positions 121, 125, and 126 each coordinate L-aspartate. N125 contributes to the L-citrulline binding site. The L-citrulline site is built by R129, S178, S187, E263, and Y275.

It belongs to the argininosuccinate synthase family. Type 1 subfamily. As to quaternary structure, homotetramer.

It localises to the cytoplasm. It catalyses the reaction L-citrulline + L-aspartate + ATP = 2-(N(omega)-L-arginino)succinate + AMP + diphosphate + H(+). The protein operates within amino-acid biosynthesis; L-arginine biosynthesis; L-arginine from L-ornithine and carbamoyl phosphate: step 2/3. This Buchnera aphidicola subsp. Schizaphis graminum (strain Sg) protein is Argininosuccinate synthase.